The sequence spans 117 residues: Putative membrane protein insertion efficiency factor (117 aa).

The segment at 87-117 (RKGGPSAAEPAIEGHIPSSPAAETPSHVQGA) is disordered.

It belongs to the UPF0161 family.

It is found in the cell membrane. In terms of biological role, could be involved in insertion of integral membrane proteins into the membrane. This chain is Putative membrane protein insertion efficiency factor, found in Streptomyces avermitilis (strain ATCC 31267 / DSM 46492 / JCM 5070 / NBRC 14893 / NCIMB 12804 / NRRL 8165 / MA-4680).